Here is a 122-residue protein sequence, read N- to C-terminus: Large ribosomal subunit protein uL14 (122 aa).

It belongs to the universal ribosomal protein uL14 family. Part of the 50S ribosomal subunit. Forms a cluster with proteins L3 and L19. In the 70S ribosome, L14 and L19 interact and together make contacts with the 16S rRNA in bridges B5 and B8.

In terms of biological role, binds to 23S rRNA. Forms part of two intersubunit bridges in the 70S ribosome. This chain is Large ribosomal subunit protein uL14, found in Kosmotoga olearia (strain ATCC BAA-1733 / DSM 21960 / TBF 19.5.1).